The primary structure comprises 383 residues: uncharacterized protein (383 aa).

[4Fe-4S] cluster-binding residues include Cys-12, Cys-18, Cys-21, and Cys-88. Residues Gln-219, Phe-246, Glu-267, and Asp-314 each coordinate S-adenosyl-L-methionine. The Nucleophile role is filled by Cys-341.

Belongs to the class I-like SAM-binding methyltransferase superfamily. RNA M5U methyltransferase family.

This is an uncharacterized protein from Protochlamydia amoebophila (strain UWE25).